Here is a 409-residue protein sequence, read N- to C-terminus: Elongation factor Tu (409 aa).

One can recognise a tr-type G domain in the interval 10-214 (KPHANIGTIG…EVDAYIPTPE (205 aa)). Residues 19 to 26 (GHVDHGKT) form a G1 region. 19–26 (GHVDHGKT) serves as a coordination point for GTP. A Mg(2+)-binding site is contributed by threonine 26. The interval 60-64 (GITIN) is G2. The tract at residues 81–84 (DCPG) is G3. Residues 81–85 (DCPGH) and 136–139 (NKED) each bind GTP. A G4 region spans residues 136-139 (NKED). The tract at residues 174-176 (SAL) is G5.

The protein belongs to the TRAFAC class translation factor GTPase superfamily. Classic translation factor GTPase family. EF-Tu/EF-1A subfamily. In terms of assembly, monomer.

The protein localises to the cytoplasm. The catalysed reaction is GTP + H2O = GDP + phosphate + H(+). Functionally, GTP hydrolase that promotes the GTP-dependent binding of aminoacyl-tRNA to the A-site of ribosomes during protein biosynthesis. The polypeptide is Elongation factor Tu (Synechococcus elongatus (strain ATCC 33912 / PCC 7942 / FACHB-805) (Anacystis nidulans R2)).